Reading from the N-terminus, the 185-residue chain is Ribosome-recycling factor (185 aa).

The disordered stretch occupies residues 142 to 161; it reads LVKDGEAGEDEGARAEKELD.

This sequence belongs to the RRF family.

It is found in the cytoplasm. Functionally, responsible for the release of ribosomes from messenger RNA at the termination of protein biosynthesis. May increase the efficiency of translation by recycling ribosomes from one round of translation to another. The polypeptide is Ribosome-recycling factor (Paenarthrobacter aurescens (strain TC1)).